A 114-amino-acid polypeptide reads, in one-letter code: ATP synthase subunit c (114 aa).

Transmembrane regions (helical) follow at residues 31–51 (AVFY…AAGG) and 88–108 (IETF…TGIF).

Belongs to the ATPase C chain family. In terms of assembly, F-type ATPases have 2 components, F(1) - the catalytic core - and F(0) - the membrane proton channel. F(1) has five subunits: alpha(3), beta(3), gamma(1), delta(1), epsilon(1). F(0) has three main subunits: a(1), b(2) and c(10-14). The alpha and beta chains form an alternating ring which encloses part of the gamma chain. F(1) is attached to F(0) by a central stalk formed by the gamma and epsilon chains, while a peripheral stalk is formed by the delta and b chains.

It is found in the cell inner membrane. F(1)F(0) ATP synthase produces ATP from ADP in the presence of a proton or sodium gradient. F-type ATPases consist of two structural domains, F(1) containing the extramembraneous catalytic core and F(0) containing the membrane proton channel, linked together by a central stalk and a peripheral stalk. During catalysis, ATP synthesis in the catalytic domain of F(1) is coupled via a rotary mechanism of the central stalk subunits to proton translocation. Functionally, key component of the F(0) channel; it plays a direct role in translocation across the membrane. A homomeric c-ring of between 10-14 subunits forms the central stalk rotor element with the F(1) delta and epsilon subunits. The polypeptide is ATP synthase subunit c (Sulfurihydrogenibium sp. (strain YO3AOP1)).